The following is a 642-amino-acid chain: Threonine--tRNA ligase (642 aa).

The TGS domain occupies 1–61 (MPVITLPDGS…ENDATLAIIT (61 aa)). The segment at 243-534 (DHRKIGKQLD…LTEEFAGFFP (292 aa)) is catalytic. Residues Cys-334, His-385, and His-511 each coordinate Zn(2+).

It belongs to the class-II aminoacyl-tRNA synthetase family. Homodimer. Zn(2+) serves as cofactor.

It is found in the cytoplasm. The catalysed reaction is tRNA(Thr) + L-threonine + ATP = L-threonyl-tRNA(Thr) + AMP + diphosphate + H(+). In terms of biological role, catalyzes the attachment of threonine to tRNA(Thr) in a two-step reaction: L-threonine is first activated by ATP to form Thr-AMP and then transferred to the acceptor end of tRNA(Thr). Also edits incorrectly charged L-seryl-tRNA(Thr). This is Threonine--tRNA ligase from Salmonella paratyphi C (strain RKS4594).